Here is a 157-residue protein sequence, read N- to C-terminus: 2-C-methyl-D-erythritol 2,4-cyclodiphosphate synthase (157 aa).

2 residues coordinate a divalent metal cation: Asp9 and His11. 4-CDP-2-C-methyl-D-erythritol 2-phosphate-binding positions include 9-11 and 35-36; these read DVH and HS. An a divalent metal cation-binding site is contributed by His43. 4-CDP-2-C-methyl-D-erythritol 2-phosphate contacts are provided by residues 57 to 59, 62 to 66, 101 to 107, 133 to 136, Phe140, and Arg143; these read DIG, FPDTD, AEKPKMA, and TTTE.

Belongs to the IspF family. Homotrimer. A divalent metal cation is required as a cofactor.

It carries out the reaction 4-CDP-2-C-methyl-D-erythritol 2-phosphate = 2-C-methyl-D-erythritol 2,4-cyclic diphosphate + CMP. Its pathway is isoprenoid biosynthesis; isopentenyl diphosphate biosynthesis via DXP pathway; isopentenyl diphosphate from 1-deoxy-D-xylulose 5-phosphate: step 4/6. Functionally, involved in the biosynthesis of isopentenyl diphosphate (IPP) and dimethylallyl diphosphate (DMAPP), two major building blocks of isoprenoid compounds. Catalyzes the conversion of 4-diphosphocytidyl-2-C-methyl-D-erythritol 2-phosphate (CDP-ME2P) to 2-C-methyl-D-erythritol 2,4-cyclodiphosphate (ME-CPP) with a corresponding release of cytidine 5-monophosphate (CMP). This Listeria innocua serovar 6a (strain ATCC BAA-680 / CLIP 11262) protein is 2-C-methyl-D-erythritol 2,4-cyclodiphosphate synthase.